The sequence spans 83 residues: Small ribosomal subunit protein bS20 (83 aa).

The tract at residues 1–25 (MPNIKSAIKRVNTTHTAEERNISQK) is disordered. Positions 16–25 (TAEERNISQK) are enriched in basic and acidic residues.

Belongs to the bacterial ribosomal protein bS20 family.

In terms of biological role, binds directly to 16S ribosomal RNA. The chain is Small ribosomal subunit protein bS20 from Staphylococcus saprophyticus subsp. saprophyticus (strain ATCC 15305 / DSM 20229 / NCIMB 8711 / NCTC 7292 / S-41).